Reading from the N-terminus, the 109-residue chain is Large ribosomal subunit protein uL1 (109 aa).

Belongs to the universal ribosomal protein uL1 family. In terms of assembly, part of the 50S ribosomal subunit.

Binds directly to 23S rRNA. The L1 stalk is quite mobile in the ribosome, and is involved in E site tRNA release. Its function is as follows. Protein L1 is also a translational repressor protein, it controls the translation of the L11 operon by binding to its mRNA. The chain is Large ribosomal subunit protein uL1 (rplA) from Aquifex pyrophilus.